The chain runs to 324 residues: Bis(5'-nucleosyl)-tetraphosphatase, symmetrical (324 aa).

A disordered region spans residues 269-324 (PGREVTAPATAPRAPRRPRERQGRQRARGGRGGGNGNGNGGNAAAPAAAPGDAPQE). The segment covering 282-297 (APRRPRERQGRQRARG) has biased composition (basic residues). Over residues 298–309 (GRGGGNGNGNGG) the composition is skewed to gly residues. The span at 310 to 324 (NAAAPAAAPGDAPQE) shows a compositional bias: low complexity.

This sequence belongs to the Ap4A hydrolase family.

It carries out the reaction P(1),P(4)-bis(5'-adenosyl) tetraphosphate + H2O = 2 ADP + 2 H(+). In terms of biological role, hydrolyzes diadenosine 5',5'''-P1,P4-tetraphosphate to yield ADP. In Xanthomonas campestris pv. campestris (strain ATCC 33913 / DSM 3586 / NCPPB 528 / LMG 568 / P 25), this protein is Bis(5'-nucleosyl)-tetraphosphatase, symmetrical.